Here is a 634-residue protein sequence, read N- to C-terminus: 1-phosphatidylinositol 4,5-bisphosphate phosphodiesterase zeta-1 (634 aa).

The region spanning 35–70 (CNTIHVKYIFKDNDRLKQGRITIEEFRTIYRIITYR) is the EF-hand domain. One can recognise a PI-PLC X-box domain in the interval 155–299 (QDMTHPLTDY…LKFKILVRNK (145 aa)). Residues His-170 and His-215 contribute to the active site. Residues 312–345 (GSDMHGKVEEFEEEEEIEQEEDGSGAKEPEPVGD) are disordered. A compositionally biased stretch (acidic residues) spans 321 to 334 (EFEEEEEIEQEEDG). Positions 376 to 492 (LSDLVIYTKV…GYVLKPRFLR (117 aa)) constitute a PI-PLC Y-box domain. Residues 492 to 615 (RDKKTKFNPH…RGYRRVPLFS (124 aa)) form the C2 domain.

As to quaternary structure, interacts (via its C2 domain) with PtdIns(3)P and, to a lesser extent, PtdIns(5)P in vitro. It depends on Ca(2+) as a cofactor.

It is found in the nucleus. The protein localises to the cytoplasm. Its subcellular location is the perinuclear region. The catalysed reaction is a 1,2-diacyl-sn-glycero-3-phospho-(1D-myo-inositol-4,5-bisphosphate) + H2O = 1D-myo-inositol 1,4,5-trisphosphate + a 1,2-diacyl-sn-glycerol + H(+). In terms of biological role, the production of the second messenger molecules diacylglycerol (DAG) and inositol 1,4,5-trisphosphate (IP3) is mediated by activated phosphatidylinositol-specific phospholipase C enzymes. In vitro, hydrolyzes PtdIns(4,5)P2 in a Ca(2+)-dependent manner. Triggers intracellular Ca(2+) oscillations in oocytes solely during M phase and is involved in inducing oocyte activation and initiating embryonic development up to the blastocyst stage. Is therefore a strong candidate for the egg-activating soluble sperm factor that is transferred from the sperm into the egg cytoplasm following gamete membrane fusion. May exert an inhibitory effect on phospholipase-C-coupled processes that depend on calcium ions and protein kinase C, including CFTR trafficking and function. The sequence is that of 1-phosphatidylinositol 4,5-bisphosphate phosphodiesterase zeta-1 from Bos taurus (Bovine).